Here is a 993-residue protein sequence, read N- to C-terminus: Isoleucine--tRNA ligase (993 aa).

The 'HIGH' region motif lies at 64–74; that stretch reads PYANGNIHIGH. Glu-621 is a binding site for L-isoleucyl-5'-AMP. Positions 662–666 match the 'KMSKS' region motif; sequence KMSKS. Residue Lys-665 participates in ATP binding.

The protein belongs to the class-I aminoacyl-tRNA synthetase family. IleS type 1 subfamily. In terms of assembly, monomer.

The protein localises to the cytoplasm. It catalyses the reaction tRNA(Ile) + L-isoleucine + ATP = L-isoleucyl-tRNA(Ile) + AMP + diphosphate. Catalyzes the attachment of isoleucine to tRNA(Ile). As IleRS can inadvertently accommodate and process structurally similar amino acids such as valine, to avoid such errors it has two additional distinct tRNA(Ile)-dependent editing activities. One activity is designated as 'pretransfer' editing and involves the hydrolysis of activated Val-AMP. The other activity is designated 'posttransfer' editing and involves deacylation of mischarged Val-tRNA(Ile). This chain is Isoleucine--tRNA ligase, found in Mesorhizobium japonicum (strain LMG 29417 / CECT 9101 / MAFF 303099) (Mesorhizobium loti (strain MAFF 303099)).